A 210-amino-acid chain; its full sequence is Thymidylate kinase (210 aa).

10-17 (GLEGAGKS) is an ATP binding site.

It belongs to the thymidylate kinase family.

The enzyme catalyses dTMP + ATP = dTDP + ADP. Phosphorylation of dTMP to form dTDP in both de novo and salvage pathways of dTTP synthesis. In Haemophilus influenzae (strain PittEE), this protein is Thymidylate kinase.